The chain runs to 393 residues: NADH-quinone oxidoreductase subunit D (393 aa).

The protein belongs to the complex I 49 kDa subunit family. In terms of assembly, NDH-1 is composed of 14 different subunits. Subunits NuoB, C, D, E, F, and G constitute the peripheral sector of the complex.

It is found in the cell inner membrane. The enzyme catalyses a quinone + NADH + 5 H(+)(in) = a quinol + NAD(+) + 4 H(+)(out). Functionally, NDH-1 shuttles electrons from NADH, via FMN and iron-sulfur (Fe-S) centers, to quinones in the respiratory chain. The immediate electron acceptor for the enzyme in this species is believed to be ubiquinone. Couples the redox reaction to proton translocation (for every two electrons transferred, four hydrogen ions are translocated across the cytoplasmic membrane), and thus conserves the redox energy in a proton gradient. The protein is NADH-quinone oxidoreductase subunit D of Ehrlichia ruminantium (strain Gardel).